A 480-amino-acid chain; its full sequence is Cyclin L homolog cyl-1 (480 aa).

The segment at 25–58 (PKEQNGNVEPKKEEDEKFESTYKQNENTQITPSS) is disordered. Residues 33–44 (EPKKEEDEKFES) are compositionally biased toward basic and acidic residues. Residues 45–58 (TYKQNENTQITPSS) show a composition bias toward polar residues. The region spanning 91 to 230 (PSLVDGLSKE…RRILATLGFV (140 aa)) is the Cyclin N-terminal domain. The segment at 368-480 (KMAPDGEKST…ESSTPPRSRR (113 aa)) is disordered. 2 stretches are compositionally biased toward basic and acidic residues: residues 384–409 (KDSR…GKKE) and 418–442 (NDRD…DEKK). The span at 443–453 (DRRKRTRSRSR) shows a compositional bias: basic residues. The segment covering 454-472 (DRKDKNRNRDVGKRYRKES) has biased composition (basic and acidic residues).

Belongs to the cyclin family.

Its function is as follows. Involved in pre-mRNA splicing. Functions in association with cyclin-dependent kinases (CDKs). Involved in induction of expression of heat shock protein hsp-16.2 in response to heat shock. Plays a role in male tail development, perhaps acting together with cell cycle regulators cdc-25.2, cdk-1, cyb-3, and cyd-1. The sequence is that of Cyclin L homolog cyl-1 from Caenorhabditis elegans.